The following is a 166-amino-acid chain: uncharacterized protein (166 aa).

Residues 2 to 82 (DNWVCYLIMS…KRLSKKRNIQ (81 aa)) form the GIY-YIG domain. The tract at residues 23–43 (NNRQRRLNDHNNLNPSRKGAK) is disordered.

This is an uncharacterized protein from Acanthamoeba polyphaga mimivirus (APMV).